A 366-amino-acid chain; its full sequence is Chalcone synthase B (366 aa).

The active site involves Cys-172.

Belongs to the thiolase-like superfamily. Chalcone/stilbene synthases family.

The enzyme catalyses (E)-4-coumaroyl-CoA + 3 malonyl-CoA + 3 H(+) = 2',4,4',6'-tetrahydroxychalcone + 3 CO2 + 4 CoA. Its pathway is secondary metabolite biosynthesis; flavonoid biosynthesis. In terms of biological role, the primary product of this enzyme is 4,2',4',6'-tetrahydroxychalcone (also termed naringenin-chalcone or chalcone) which can under specific conditions spontaneously isomerize into naringenin. This is Chalcone synthase B (CHSB) from Ipomoea triloba (Trilobed morning glory).